The chain runs to 159 residues: Putative transcriptional regulatory protein rrnAC0199 (159 aa).

The protein belongs to the Tfx family.

In terms of biological role, putative transcriptional regulator. This chain is Putative transcriptional regulatory protein rrnAC0199, found in Haloarcula marismortui (strain ATCC 43049 / DSM 3752 / JCM 8966 / VKM B-1809) (Halobacterium marismortui).